Consider the following 134-residue polypeptide: Ribonuclease P protein component (134 aa).

This sequence belongs to the RnpA family. In terms of assembly, consists of a catalytic RNA component (M1 or rnpB) and a protein subunit.

The enzyme catalyses Endonucleolytic cleavage of RNA, removing 5'-extranucleotides from tRNA precursor.. Functionally, RNaseP catalyzes the removal of the 5'-leader sequence from pre-tRNA to produce the mature 5'-terminus. It can also cleave other RNA substrates such as 4.5S RNA. The protein component plays an auxiliary but essential role in vivo by binding to the 5'-leader sequence and broadening the substrate specificity of the ribozyme. The sequence is that of Ribonuclease P protein component from Pseudomonas putida (strain ATCC 700007 / DSM 6899 / JCM 31910 / BCRC 17059 / LMG 24140 / F1).